A 248-amino-acid chain; its full sequence is Small ribosomal subunit protein uS5 (248 aa).

The disordered stretch occupies residues 1–87 (MEDKKLSSAK…NPRFQRNNKD (87 aa)). Residues 8-23 (SAKPATSSKPAPKAPS) are compositionally biased toward low complexity. Basic and acidic residues predominate over residues 57–87 (VAFEKRNFTSGDKTKKPTDSKNPRFQRNNKD). In terms of domain architecture, S5 DRBM spans 94 to 157 (YEEKIVDIAR…KDAHNNLVEV (64 aa)).

The protein belongs to the universal ribosomal protein uS5 family. As to quaternary structure, part of the 30S ribosomal subunit. Contacts proteins S4 and S8.

With S4 and S12 plays an important role in translational accuracy. Its function is as follows. Located at the back of the 30S subunit body where it stabilizes the conformation of the head with respect to the body. This Mycoplasmopsis synoviae (strain 53) (Mycoplasma synoviae) protein is Small ribosomal subunit protein uS5.